The chain runs to 248 residues: Probable transcriptional regulatory protein Dde_2325 (248 aa).

Residues 1-15 are compositionally biased toward basic residues; it reads MAGHSKWKNIQHRKG. The segment at 1–22 is disordered; sequence MAGHSKWKNIQHRKGRQDAKKS.

It belongs to the TACO1 family.

The protein resides in the cytoplasm. This Oleidesulfovibrio alaskensis (strain ATCC BAA-1058 / DSM 17464 / G20) (Desulfovibrio alaskensis) protein is Probable transcriptional regulatory protein Dde_2325.